A 350-amino-acid polypeptide reads, in one-letter code: Protein RecA (350 aa).

An ATP-binding site is contributed by 67-74; sequence GPESSGKT.

The protein belongs to the RecA family.

It is found in the cytoplasm. Functionally, can catalyze the hydrolysis of ATP in the presence of single-stranded DNA, the ATP-dependent uptake of single-stranded DNA by duplex DNA, and the ATP-dependent hybridization of homologous single-stranded DNAs. It interacts with LexA causing its activation and leading to its autocatalytic cleavage. This chain is Protein RecA, found in Chlamydia caviae (strain ATCC VR-813 / DSM 19441 / 03DC25 / GPIC) (Chlamydophila caviae).